We begin with the raw amino-acid sequence, 369 residues long: Delta(14)-sterol reductase (369 aa).

The next 7 helical transmembrane spans lie at 15-34 (QSVY…GEIL), 54-76 (CNGL…LGIV), 86-105 (LELL…ALYV), 146-168 (FFFV…AKSV), 178-195 (ILYQ…FVHE), 208-230 (RLGF…IQGW), and 240-262 (TVPA…RGAN). NADP(+) is bound by residues K265, K269, L289, W294, and 301–302 (NY). A helical membrane pass occupies residues 275–297 (PIWGKPPVVVGGKLLVSGYWGIA). Residues 317-336 (GISSPVPYFYPIYLLILLIW) form a helical membrane-spanning segment. Residues D341, 345-349 (CAEKY), and Y356 each bind NADP(+).

It belongs to the ERG4/ERG24 family.

The protein localises to the membrane. The enzyme catalyses 4,4-dimethyl-5alpha-cholesta-8,24-dien-3beta-ol + NADP(+) = 4,4-dimethyl-5alpha-cholesta-8,14,24-trien-3beta-ol + NADPH + H(+). It participates in steroid biosynthesis; zymosterol biosynthesis; zymosterol from lanosterol: step 2/6. Functionally, reduces the C14=C15 double bond of 4,4-dimethyl-cholesta-8,14,24-trienol to produce 4,4-dimethyl-cholesta-8,24-dienol. Required for cell division and expansion and is involved in proper organization of the embryo. The chain is Delta(14)-sterol reductase (FK) from Arabidopsis thaliana (Mouse-ear cress).